We begin with the raw amino-acid sequence, 202 residues long: FMN reductase (NADH) RutF 1 (202 aa).

Residues P168 to A202 are disordered. The segment covering P171–A196 has biased composition (low complexity).

The protein belongs to the non-flavoprotein flavin reductase family. RutF subfamily.

The catalysed reaction is FMNH2 + NAD(+) = FMN + NADH + 2 H(+). In terms of biological role, catalyzes the reduction of FMN to FMNH2 which is used to reduce pyrimidine by RutA via the Rut pathway. In Methylorubrum extorquens (strain PA1) (Methylobacterium extorquens), this protein is FMN reductase (NADH) RutF 1.